Reading from the N-terminus, the 139-residue chain is Ribulose bisphosphate carboxylase small subunit (139 aa).

This sequence belongs to the RuBisCO small chain family. As to quaternary structure, heterohexadecamer of 8 large and 8 small subunits.

The protein resides in the plastid. It is found in the chloroplast. Functionally, ruBisCO catalyzes two reactions: the carboxylation of D-ribulose 1,5-bisphosphate, the primary event in carbon dioxide fixation, as well as the oxidative fragmentation of the pentose substrate in the photorespiration process. Both reactions occur simultaneously and in competition at the same active site. Although the small subunit is not catalytic it is essential for maximal activity. This Cylindrotheca sp. (strain N1) (Marine diatom) protein is Ribulose bisphosphate carboxylase small subunit.